We begin with the raw amino-acid sequence, 425 residues long: Tol-Pal system protein TolB (425 aa).

Positions M1–A25 are cleaved as a signal peptide.

Belongs to the TolB family. As to quaternary structure, the Tol-Pal system is composed of five core proteins: the inner membrane proteins TolA, TolQ and TolR, the periplasmic protein TolB and the outer membrane protein Pal. They form a network linking the inner and outer membranes and the peptidoglycan layer.

The protein resides in the periplasm. In terms of biological role, part of the Tol-Pal system, which plays a role in outer membrane invagination during cell division and is important for maintaining outer membrane integrity. The sequence is that of Tol-Pal system protein TolB from Acinetobacter baylyi (strain ATCC 33305 / BD413 / ADP1).